The sequence spans 196 residues: Holliday junction branch migration complex subunit RuvA (196 aa).

A domain I region spans residues 1-61 (MYEYFEGIVT…DTGITLYGFQ (61 aa)). The interval 62 to 140 (SEDDKGLFLK…DYVARLDRQD (79 aa)) is domain II. Residues 141–149 (EEQGNISPA) are flexible linker. Residues 149–196 (ALNDALLALIALGYTQKEVDRITTKLEEVNADTADQYIKKGLALLLKK) are domain III.

It belongs to the RuvA family. In terms of assembly, homotetramer. Forms an RuvA(8)-RuvB(12)-Holliday junction (HJ) complex. HJ DNA is sandwiched between 2 RuvA tetramers; dsDNA enters through RuvA and exits via RuvB. An RuvB hexamer assembles on each DNA strand where it exits the tetramer. Each RuvB hexamer is contacted by two RuvA subunits (via domain III) on 2 adjacent RuvB subunits; this complex drives branch migration. In the full resolvosome a probable DNA-RuvA(4)-RuvB(12)-RuvC(2) complex forms which resolves the HJ.

Its subcellular location is the cytoplasm. The RuvA-RuvB-RuvC complex processes Holliday junction (HJ) DNA during genetic recombination and DNA repair, while the RuvA-RuvB complex plays an important role in the rescue of blocked DNA replication forks via replication fork reversal (RFR). RuvA specifically binds to HJ cruciform DNA, conferring on it an open structure. The RuvB hexamer acts as an ATP-dependent pump, pulling dsDNA into and through the RuvAB complex. HJ branch migration allows RuvC to scan DNA until it finds its consensus sequence, where it cleaves and resolves the cruciform DNA. The polypeptide is Holliday junction branch migration complex subunit RuvA (Lactobacillus helveticus (strain DPC 4571)).